Reading from the N-terminus, the 134-residue chain is Zinc finger protein 593 (134 aa).

Residues 1–25 (MGRSRRTGAHRAHSLARQMKAKRRR) are compositionally biased toward basic residues. 2 disordered regions span residues 1–57 (MGRS…DLPG) and 82–134 (SKDH…DTST). Residues 26-36 (PDLDEIHRELR) are compositionally biased toward basic and acidic residues. The segment at 61 to 85 (HRCLACARYFIDSTNLKTHFRSKDH) adopts a C2H2-type zinc-finger fold.

It belongs to the ZNF593/BUD20 C2H2-type zinc-finger protein family. In terms of assembly, associates with pre-60S ribosomal particles. Ubiquitous. Detected in spleen, prostate, testis, small intestine, colon and to a minor level in thymus and peripheral blood leukocytes.

It localises to the nucleus. The protein resides in the nucleolus. The protein localises to the cytoplasm. Its function is as follows. Involved in pre-60S ribosomal particles maturation by promoting the nuclear export of the 60S ribosome. Negatively modulates the DNA binding activity of Oct-2 and therefore its transcriptional regulatory activity. The chain is Zinc finger protein 593 (ZNF593) from Homo sapiens (Human).